We begin with the raw amino-acid sequence, 88 residues long: HssA/B-like protein 9 (88 aa).

Positions 1 to 14 (MSILSALTSISNPM) are enriched in polar residues. The disordered stretch occupies residues 1-26 (MSILSALTSISNPMKSSKSSVANGGG).

Belongs to the hssA/B family.

The polypeptide is HssA/B-like protein 9 (hssl9) (Dictyostelium discoideum (Social amoeba)).